The primary structure comprises 177 residues: MKIVGDSEHFKQPYDSDEEYVSKTEDKRDCEAAQKVGMELVSLSKTQLDKIELDEHLYDSIQQAHKIKPKTEAYRRHMQYIGKLMRNVDVEPIKAALAIVLNKNNNETAKLQMFEKMRERLLSQGDSEIQTLVEHYPQLDRQKLRTLVRQATKELAKGPESKSSKELFKYLRSEIQD.

Residues 1 to 26 (MKIVGDSEHFKQPYDSDEEYVSKTED) are disordered.

Belongs to the DarP family.

The protein resides in the cytoplasm. Functionally, member of a network of 50S ribosomal subunit biogenesis factors which assembles along the 30S-50S interface, preventing incorrect 23S rRNA structures from forming. Promotes peptidyl transferase center (PTC) maturation. The chain is Dual-action ribosomal maturation protein DarP from Shewanella sp. (strain ANA-3).